Here is a 185-residue protein sequence, read N- to C-terminus: Elongation factor P (185 aa).

The protein belongs to the elongation factor P family.

It is found in the cytoplasm. It participates in protein biosynthesis; polypeptide chain elongation. Its function is as follows. Involved in peptide bond synthesis. Stimulates efficient translation and peptide-bond synthesis on native or reconstituted 70S ribosomes in vitro. Probably functions indirectly by altering the affinity of the ribosome for aminoacyl-tRNA, thus increasing their reactivity as acceptors for peptidyl transferase. This Bacillus cereus (strain B4264) protein is Elongation factor P.